A 176-amino-acid polypeptide reads, in one-letter code: MNFNINQSSISDAITKTFGNLTINWPFFVFSFLTLILVVTIVTLLVYKPLKKMLKNRQNFIQNNIDESIKAKEAALKVQEEIDEKIIESSKHANQIIEQAKLERERIINNGIEVSNKKAEIIIEQANILVTKSQAEFENKQRKIIVENAVEIAKKIIGREIRDKDNLKMIEEMLES.

Residues 27–47 traverse the membrane as a helical segment; the sequence is FFVFSFLTLILVVTIVTLLVY.

This sequence belongs to the ATPase B chain family. As to quaternary structure, F-type ATPases have 2 components, F(1) - the catalytic core - and F(0) - the membrane proton channel. F(1) has five subunits: alpha(3), beta(3), gamma(1), delta(1), epsilon(1). F(0) has three main subunits: a(1), b(2) and c(10-14). The alpha and beta chains form an alternating ring which encloses part of the gamma chain. F(1) is attached to F(0) by a central stalk formed by the gamma and epsilon chains, while a peripheral stalk is formed by the delta and b chains.

The protein resides in the cell membrane. Its function is as follows. F(1)F(0) ATP synthase produces ATP from ADP in the presence of a proton or sodium gradient. F-type ATPases consist of two structural domains, F(1) containing the extramembraneous catalytic core and F(0) containing the membrane proton channel, linked together by a central stalk and a peripheral stalk. During catalysis, ATP synthesis in the catalytic domain of F(1) is coupled via a rotary mechanism of the central stalk subunits to proton translocation. In terms of biological role, component of the F(0) channel, it forms part of the peripheral stalk, linking F(1) to F(0). This is ATP synthase subunit b from Metamycoplasma arthritidis (strain 158L3-1) (Mycoplasma arthritidis).